Reading from the N-terminus, the 406-residue chain is CCA-adding enzyme (406 aa).

Residues glycine 32 and arginine 35 each contribute to the ATP site. CTP is bound by residues glycine 32 and arginine 35. Mg(2+) contacts are provided by aspartate 45 and aspartate 47. Arginine 116, aspartate 159, arginine 162, arginine 165, and arginine 168 together coordinate ATP. 5 residues coordinate CTP: arginine 116, aspartate 159, arginine 162, arginine 165, and arginine 168.

Belongs to the tRNA nucleotidyltransferase/poly(A) polymerase family. Bacterial CCA-adding enzyme type 3 subfamily. As to quaternary structure, homodimer. The cofactor is Mg(2+).

The catalysed reaction is a tRNA precursor + 2 CTP + ATP = a tRNA with a 3' CCA end + 3 diphosphate. It catalyses the reaction a tRNA with a 3' CCA end + 2 CTP + ATP = a tRNA with a 3' CCACCA end + 3 diphosphate. Its function is as follows. Catalyzes the addition and repair of the essential 3'-terminal CCA sequence in tRNAs without using a nucleic acid template. Adds these three nucleotides in the order of C, C, and A to the tRNA nucleotide-73, using CTP and ATP as substrates and producing inorganic pyrophosphate. tRNA 3'-terminal CCA addition is required both for tRNA processing and repair. Also involved in tRNA surveillance by mediating tandem CCA addition to generate a CCACCA at the 3' terminus of unstable tRNAs. While stable tRNAs receive only 3'-terminal CCA, unstable tRNAs are marked with CCACCA and rapidly degraded. This Enterococcus faecalis (strain ATCC 700802 / V583) protein is CCA-adding enzyme.